Reading from the N-terminus, the 306-residue chain is tRNA dimethylallyltransferase (306 aa).

13-20 contacts ATP; the sequence is GPTGAGKT. A substrate-binding site is contributed by 15–20; it reads TGAGKT. Interaction with substrate tRNA stretches follow at residues 38-41 and 161-165; these read DSRQ and QRNAR.

The protein belongs to the IPP transferase family. As to quaternary structure, monomer. The cofactor is Mg(2+).

It catalyses the reaction adenosine(37) in tRNA + dimethylallyl diphosphate = N(6)-dimethylallyladenosine(37) in tRNA + diphosphate. In terms of biological role, catalyzes the transfer of a dimethylallyl group onto the adenine at position 37 in tRNAs that read codons beginning with uridine, leading to the formation of N6-(dimethylallyl)adenosine (i(6)A). This Maridesulfovibrio salexigens (strain ATCC 14822 / DSM 2638 / NCIMB 8403 / VKM B-1763) (Desulfovibrio salexigens) protein is tRNA dimethylallyltransferase.